We begin with the raw amino-acid sequence, 140 residues long: MIYGVGTDIIQIARVQGVMERTNGRFAEKVLGPDELAKYHARKARSEKRGLAFLSTRFAAKEAFSKAIGLGMRWPMTWRAMELMNLPSGEPTPICHGELAAWLAERGLSVRVSVSDEHDFAVAFAIAERAGGAASQPTAL.

The Mg(2+) site is built by Asp8 and Glu62.

This sequence belongs to the P-Pant transferase superfamily. AcpS family. Mg(2+) is required as a cofactor.

Its subcellular location is the cytoplasm. The enzyme catalyses apo-[ACP] + CoA = holo-[ACP] + adenosine 3',5'-bisphosphate + H(+). Functionally, transfers the 4'-phosphopantetheine moiety from coenzyme A to a Ser of acyl-carrier-protein. The chain is Holo-[acyl-carrier-protein] synthase from Cupriavidus necator (strain ATCC 17699 / DSM 428 / KCTC 22496 / NCIMB 10442 / H16 / Stanier 337) (Ralstonia eutropha).